A 307-amino-acid chain; its full sequence is MKPLKEQKIAVLLGGTSAEREVSLTSGDAVLTALRNQGYDAHPIDPKEYPVAQLKEQGFERAFNILHGRGGEDGVIQGVLEQIGLPYTGCGVMTSALTMDKMRTKMLWKGFGLPIADMEIVTRDTVDELNPLEVVERLGLPLMVKPSREGSSVGLTKVNAVEELKNAVDLALTHDDTVLIEEWLSGIEMTVPVLDDQVLPAVQIIPEGEFYDYDAKYISDNTRYICPAPMSEESLQELQKLVKRAYDVVGCRGWSRIDVMTDANGNFRLVEVNTTPGMTSHSLFPKSAATVGYSFEQLVVKILELSA.

In terms of domain architecture, ATP-grasp spans Lys105–Glu304. Residue Val135 to Thr190 participates in ATP binding. The Mg(2+) site is built by Asp258, Glu271, and Asn273.

This sequence belongs to the D-alanine--D-alanine ligase family. It depends on Mg(2+) as a cofactor. Mn(2+) is required as a cofactor.

The protein localises to the cytoplasm. It catalyses the reaction 2 D-alanine + ATP = D-alanyl-D-alanine + ADP + phosphate + H(+). The protein operates within cell wall biogenesis; peptidoglycan biosynthesis. Cell wall formation. The protein is D-alanine--D-alanine ligase of Mannheimia succiniciproducens (strain KCTC 0769BP / MBEL55E).